Here is a 448-residue protein sequence, read N- to C-terminus: Probable glycine dehydrogenase (decarboxylating) subunit 1 (448 aa).

This sequence belongs to the GcvP family. N-terminal subunit subfamily. The glycine cleavage system is composed of four proteins: P, T, L and H. In this organism, the P 'protein' is a heterodimer of two subunits.

The catalysed reaction is N(6)-[(R)-lipoyl]-L-lysyl-[glycine-cleavage complex H protein] + glycine + H(+) = N(6)-[(R)-S(8)-aminomethyldihydrolipoyl]-L-lysyl-[glycine-cleavage complex H protein] + CO2. Its function is as follows. The glycine cleavage system catalyzes the degradation of glycine. The P protein binds the alpha-amino group of glycine through its pyridoxal phosphate cofactor; CO(2) is released and the remaining methylamine moiety is then transferred to the lipoamide cofactor of the H protein. The polypeptide is Probable glycine dehydrogenase (decarboxylating) subunit 1 (Lysinibacillus sphaericus (strain C3-41)).